The following is a 158-amino-acid chain: C-type lectin galactose-binding isoform (158 aa).

The first 23 residues, 1–23 (MGRFLLVTLSLLVMAFFLNGANS), serve as a signal peptide directing secretion. Intrachain disulfides connect Cys26–Cys37, Cys54–Cys154, and Cys129–Cys146. The 123-residue stretch at 33 to 155 (RNGFCYKVFN…CTALRPFLCQ (123 aa)) folds into the C-type lectin domain. Residues Gln119, Asp121, and Glu127 each contribute to the Ca(2+) site. The short motif at 119–121 (QPD) is the Galactose-binding element. An N-linked (GlcNAc...) asparagine glycan is attached at Asn134. Ca(2+) contacts are provided by Asn142 and Asp143.

Belongs to the true venom lectin family. Dimer. Probably disulfide-linked homodimer. In terms of tissue distribution, expressed by the venom gland.

It is found in the secreted. Galactose-binding lectin that binds to and agglutinates erythrocytes in a calcium-dependent manner. This chain is C-type lectin galactose-binding isoform, found in Pseudechis australis (Mulga snake).